Reading from the N-terminus, the 63-residue chain is Large ribosomal subunit protein uL29 (63 aa).

It belongs to the universal ribosomal protein uL29 family.

The sequence is that of Large ribosomal subunit protein uL29 from Shigella dysenteriae serotype 1 (strain Sd197).